Consider the following 295-residue polypeptide: Probable intramembrane protease C25B8.17 (295 aa).

Residues 1–21 form a helical membrane-spanning segment; sequence MEGVILASSALFTVYIGAKWS. The Cytoplasmic segment spans residues 22-35; it reads AQEEEPEEKQLINK. Residues 36 to 56 traverse the membrane as a helical segment; the sequence is RLAVLFPIFGGVTLVLMYLAL. At 57–63 the chain is on the lumenal side; it reads RYLSKEY. The helical transmembrane segment at 64 to 84 threads the bilayer; it reads IQLILQGYASLASIICFVRSF. Residues 85–89 lie on the Cytoplasmic side of the membrane; it reads NPKTT. The chain crosses the membrane as a helical span at residues 90–106; that stretch reads FGKITATMSSIAIALFY. Residues 107-111 lie on the Lumenal side of the membrane; the sequence is FKTKH. The helical transmembrane segment at 112 to 130 threads the bilayer; sequence WMASNILAWALAANSISIM. Over 131–139 the chain is Cytoplasmic; sequence RIDSYNTGA. A helical transmembrane segment spans residues 140 to 160; that stretch reads LLLGALFFYDIYFVFGTEVMV. Residue aspartate 149 is part of the active site. The Lumenal segment spans residues 161 to 183; that stretch reads TVATGIDIPAKYVLPQFKNPTRL. A helical transmembrane segment spans residues 184 to 204; the sequence is SMLGLGDIVMPGLMLALMYRF. Residue aspartate 190 is part of the active site. Residues 205-221 are Cytoplasmic-facing; sequence DLHYYINSTSQPKKHST. Residues 222 to 244 traverse the membrane as a helical segment; sequence YFRNTFIAYGLGLGVTNFALYYF. The Lumenal segment spans residues 245–249; it reads KAAQP. The PAL motif lies at 249–251; the sequence is PAL. Residues 250-268 form a helical membrane-spanning segment; that stretch reads ALLYLSPACIVAPLLTAWY. The Cytoplasmic portion of the chain corresponds to 269–295; it reads RDELKTLFSFRSETEDETDEQDKCKST.

Belongs to the peptidase A22B family.

It is found in the endoplasmic reticulum membrane. Its subcellular location is the golgi apparatus membrane. This chain is Probable intramembrane protease C25B8.17, found in Schizosaccharomyces pombe (strain 972 / ATCC 24843) (Fission yeast).